The following is an 89-amino-acid chain: Small ribosomal subunit protein uS19 (89 aa).

This sequence belongs to the universal ribosomal protein uS19 family.

In terms of biological role, protein S19 forms a complex with S13 that binds strongly to the 16S ribosomal RNA. This is Small ribosomal subunit protein uS19 from Ruthia magnifica subsp. Calyptogena magnifica.